A 269-amino-acid polypeptide reads, in one-letter code: Putative phosphoenolpyruvate synthase regulatory protein (269 aa).

Position 149-156 (149-156 (GVSRSGKT)) interacts with ADP.

The protein belongs to the pyruvate, phosphate/water dikinase regulatory protein family. PSRP subfamily.

It carries out the reaction [pyruvate, water dikinase] + ADP = [pyruvate, water dikinase]-phosphate + AMP + H(+). It catalyses the reaction [pyruvate, water dikinase]-phosphate + phosphate + H(+) = [pyruvate, water dikinase] + diphosphate. Its function is as follows. Bifunctional serine/threonine kinase and phosphorylase involved in the regulation of the phosphoenolpyruvate synthase (PEPS) by catalyzing its phosphorylation/dephosphorylation. This Pseudoalteromonas translucida (strain TAC 125) protein is Putative phosphoenolpyruvate synthase regulatory protein.